A 207-amino-acid chain; its full sequence is Large ribosomal subunit protein uL4 (207 aa).

The tract at residues 45–78 (RQGTHKTKNRAEVSGGGRKPWRQKGTGRARQGSI) is disordered.

It belongs to the universal ribosomal protein uL4 family. In terms of assembly, part of the 50S ribosomal subunit.

Functionally, one of the primary rRNA binding proteins, this protein initially binds near the 5'-end of the 23S rRNA. It is important during the early stages of 50S assembly. It makes multiple contacts with different domains of the 23S rRNA in the assembled 50S subunit and ribosome. In terms of biological role, forms part of the polypeptide exit tunnel. In Geobacillus sp. (strain WCH70), this protein is Large ribosomal subunit protein uL4.